Here is a 233-residue protein sequence, read N- to C-terminus: Achaete-scute homolog 1 (233 aa).

Disordered regions lie at residues 1-24 (MESS…FLPP) and 39-95 (AAAA…ELMR). Residues 39 to 62 (AAAAAAQSAQQQQQQQAPQQQAPQ) show a composition bias toward low complexity. Residues 78–87 (SAAKQVKRQR) are compositionally biased toward basic residues. Residues 115–167 (AAVARRNERERNRVKLVNLGFATLREHVPNGAANKKMSKVETLRSAVEYIRAL) form the bHLH domain. An N6-acetyllysine modification is found at Lys-153.

In terms of assembly, efficient DNA binding requires dimerization with another bHLH protein. Forms a heterodimer with TCF3. As to expression, developing CNS and PNS at embryonic and postnatal stages.

It is found in the nucleus. Transcription factor that plays a key role in neuronal differentiation: acts as a pioneer transcription factor, accessing closed chromatin to allow other factors to bind and activate neural pathways. Directly binds the E box motif (5'-CANNTG-3') on promoters and promotes transcription of neuronal genes. The combination of three transcription factors, ASCL1, POU3F2/BRN2 and MYT1L, is sufficient to reprogram fibroblasts and other somatic cells into induced neuronal (iN) cells in vitro. Plays a role at early stages of development of specific neural lineages in most regions of the CNS, and of several lineages in the PNS. Essential for the generation of olfactory and autonomic neurons. Acts synergistically with FOXN4 to specify the identity of V2b neurons rather than V2a from bipotential p2 progenitors during spinal cord neurogenesis, probably through DLL4-NOTCH signaling activation. Involved in the regulation of neuroendocrine cell development in the glandular stomach. The protein is Achaete-scute homolog 1 (Ascl1) of Rattus norvegicus (Rat).